The chain runs to 637 residues: Clathrin coat assembly protein AP180A (637 aa).

Residues 1 to 126 (MTTYFKLVKG…REFGKIKKDY (126 aa)) enclose the ENTH domain. The interval 555 to 637 (TQNHLQQQQQ…YANNLNLIDM (83 aa)) is disordered. Low complexity-rich tracts occupy residues 560-579 (QQQQ…QPQQ) and 600-622 (QPQN…TQQP). The segment at 587-637 (AGANPVTNITGTVQPQNFPFYPQQQPQPEQSQTQQPVLGNQYANNLNLIDM) is clathrin-binding. Residues 623-637 (VLGNQYANNLNLIDM) show a composition bias toward polar residues.

This sequence belongs to the AP180 family. As to quaternary structure, interacts with PAN1 and the clathrin heavy and light chains CHC1 and CLC1.

The protein resides in the bud. It is found in the bud neck. It localises to the cell membrane. The protein localises to the cytoplasm. Functionally, involved in endocytosis and clathrin cage assembly. The protein is Clathrin coat assembly protein AP180A (YAP1801) of Saccharomyces cerevisiae (strain ATCC 204508 / S288c) (Baker's yeast).